A 511-amino-acid chain; its full sequence is Pancreatic alpha-amylase (511 aa).

Residues 1-15 form the signal peptide; it reads MKLFLLLSAFGFCWA. At Q16 the chain carries Pyrrolidone carboxylic acid. Disulfide bonds link C43/C101, C85/C130, and C156/C175. Ca(2+) is bound by residues N115, R173, and D182. R210 contributes to the chloride binding site. The active-site Nucleophile is D212. H216 contributes to the Ca(2+) binding site. The active-site Proton donor is the E248. Chloride is bound by residues N313 and R352. A disulfide bridge links C393 with C399. N427 carries an N-linked (GlcNAc...) asparagine glycan. A disulfide bond links C465 and C477.

Belongs to the glycosyl hydrolase 13 family. Binds to the sea anemone inhibitor helianthamide and magnificamide. It depends on Ca(2+) as a cofactor. The cofactor is chloride.

It localises to the secreted. Its subcellular location is the extracellular space. The enzyme catalyses Endohydrolysis of (1-&gt;4)-alpha-D-glucosidic linkages in polysaccharides containing three or more (1-&gt;4)-alpha-linked D-glucose units.. This chain is Pancreatic alpha-amylase (AMY2), found in Sus scrofa (Pig).